A 488-amino-acid polypeptide reads, in one-letter code: Limb region 1 protein homolog (488 aa).

At 1-18 (MEADEVSIREQNFHSQVR) the chain is on the extracellular side. A helical membrane pass occupies residues 19–39 (EYTICFLLFAVLYIVSYFIIT). The Cytoplasmic segment spans residues 40-61 (RYKRKADEQEDEDAIVNRISLF). A helical membrane pass occupies residues 62 to 82 (LSTFTLAVSAGAVLLLPFSII). Residues 83–109 (SNEILLSFPQNYYIQWLNGSLIHGLWN) lie on the Extracellular side of the membrane. Residues 110–130 (LASLFSNLCLFVLMPFAFFFL) form a helical membrane-spanning segment. The Cytoplasmic portion of the chain corresponds to 131 to 150 (ESEGFAGLKKGIRARILETL). Residues 151-171 (VMLILLALLILGIVWVASALI) traverse the membrane as a helical segment. Residues 172 to 186 (DNDAASMESLYDLWE) lie on the Extracellular side of the membrane. The helical transmembrane segment at 187–207 (FYLPYLYSCISLMGCLLLLLC) threads the bilayer. Over 208–295 (TPVGLSRMFT…AWERNLVYPA (88 aa)) the chain is Cytoplasmic. Residues 246-286 (IQRKLNGISSTLENQTVELERELEKVKCKKTNLERRKKASA) are a coiled coil. Residues 296 to 316 (VMILLLIETSISVLLVAFNIL) form a helical membrane-spanning segment. Over 317–338 (YLLVDETAMPKGSGGPGIGNAS) the chain is Extracellular. Residues 339–359 (LSTFGFVGAALEIILIFYLMV) traverse the membrane as a helical segment. At 360–382 (SSVVGFYSLRFFENFIPRKDDTT) the chain is on the cytoplasmic side. The helical transmembrane segment at 383–403 (MTKIIGNCVSILVLSSALPVM) threads the bilayer. Residues 404–425 (SRTLGITRFDLLGDFGRFNWLG) are Extracellular-facing. A helical membrane pass occupies residues 426 to 446 (NFYIVLSYNLLFAIMTTLCLV). Residues 447-488 (RKFTSAVREELLKALGLDKLHLSNNPRDSETKPSANGHQKTL) are Cytoplasmic-facing.

It belongs to the LIMR family. As to expression, detected ubiquitously at low levels throughout the developing embryo. Present initially in the limb mesoderm as the limb bud emerges from the body wall and up-regulated along the posterior margin of the developing limb bud with progression of the limb outgrowth. Higher levels are detected in limb buds, otic vesicles and pharyngeal arches. Isoform 1 is detected in lung, spleen, heart, breast muscle, cartilage and liver of the adult tissues. Isoform 3 is detected in adult lung, spleen, heart and breast muscle but not detected in cartilage and liver.

It is found in the membrane. In terms of biological role, putative membrane receptor. This is Limb region 1 protein homolog (LMBR1) from Gallus gallus (Chicken).